The following is an 81-amino-acid chain: MKIESISPVQPSQDAGAEAVGHFEGRSVTRAAVRGEDRSSVAGLARWLARNVAGDPRSEQALQRLADGDGTPLEARTVRRR.

Positions 55–81 are disordered; sequence DPRSEQALQRLADGDGTPLEARTVRRR.

In terms of assembly, interacts with ExsC.

It is found in the cytoplasm. The protein resides in the secreted. Acts as a negative regulator of the type III secretion regulon (T3SS) expression. In the absence of inducing signals such as low Ca(2+) or host cell contact, the T3SS/injectisome is expressed at a low basal level and exists in a quiescent state due to ExsA sequestration by ExsD. ExsE binding to ExsC disrupts the complex between ExsC and ExsD, thereby allowing free ExsD to bind ExsA. Upon inducing signal, ExsE is secreted allowing ExsC to bind ExsD. In turn, ExsD cannot bind ExsA and prevent ExsA-mediated transcriptional activation of the type III secretion system. The polypeptide is Type III secretion regulatory protein ExsE (exsE) (Pseudomonas aeruginosa (strain ATCC 15692 / DSM 22644 / CIP 104116 / JCM 14847 / LMG 12228 / 1C / PRS 101 / PAO1)).